A 340-amino-acid chain; its full sequence is Mitochondrial distribution and morphology protein 12 (340 aa).

The 321-residue stretch at 1–321 folds into the SMP-LTD domain; that stretch reads MSIDLDWDGM…WPSWIKVSME (321 aa). 3 disordered regions span residues 79–107, 161–184, and 319–340; these read HYLP…TNPI, SVRE…EDRE, and SMED…EDEH. A compositionally biased stretch (polar residues) spans 89–106; the sequence is QRRSAPSTPHIHTNTTNP. Positions 321–340 are enriched in acidic residues; sequence EDEDSDDEEGEEEGDQEDEH.

The protein belongs to the MDM12 family. Component of the ER-mitochondria encounter structure (ERMES) or MDM complex, composed of MMM1, MDM10, MDM12 and MDM34. An MMM1 homodimer associates with one molecule of MDM12 on each side in a pairwise head-to-tail manner, and the SMP-LTD domains of MMM1 and MDM12 generate a continuous hydrophobic tunnel for phospholipid trafficking.

It is found in the mitochondrion outer membrane. Its subcellular location is the endoplasmic reticulum membrane. Its function is as follows. Component of the ERMES/MDM complex, which serves as a molecular tether to connect the endoplasmic reticulum (ER) and mitochondria. Components of this complex are involved in the control of mitochondrial shape and protein biogenesis, and function in nonvesicular lipid trafficking between the ER and mitochondria. MDM12 is required for the interaction of the ER-resident membrane protein MMM1 and the outer mitochondrial membrane-resident beta-barrel protein MDM10. The MDM12-MMM1 subcomplex functions in the major beta-barrel assembly pathway that is responsible for biogenesis of all mitochondrial outer membrane beta-barrel proteins, and acts in a late step after the SAM complex. The MDM10-MDM12-MMM1 subcomplex further acts in the TOM40-specific pathway after the action of the MDM12-MMM1 complex. Essential for establishing and maintaining the structure of mitochondria and maintenance of mtDNA nucleoids. The sequence is that of Mitochondrial distribution and morphology protein 12 from Yarrowia lipolytica (strain CLIB 122 / E 150) (Yeast).